The following is a 104-amino-acid chain: Protein RnfH (104 aa).

It belongs to the UPF0125 (RnfH) family.

This is Protein RnfH from Pseudomonas fluorescens (strain ATCC BAA-477 / NRRL B-23932 / Pf-5).